Here is a 344-residue protein sequence, read N- to C-terminus: Uroporphyrinogen decarboxylase (344 aa).

Substrate-binding positions include 26-30 (RQAGR), Phe-45, Asp-75, Tyr-151, Ser-206, and His-320.

This sequence belongs to the uroporphyrinogen decarboxylase family. Homodimer.

The protein resides in the cytoplasm. The enzyme catalyses uroporphyrinogen III + 4 H(+) = coproporphyrinogen III + 4 CO2. It functions in the pathway porphyrin-containing compound metabolism; protoporphyrin-IX biosynthesis; coproporphyrinogen-III from 5-aminolevulinate: step 4/4. Catalyzes the decarboxylation of four acetate groups of uroporphyrinogen-III to yield coproporphyrinogen-III. This Staphylococcus saprophyticus subsp. saprophyticus (strain ATCC 15305 / DSM 20229 / NCIMB 8711 / NCTC 7292 / S-41) protein is Uroporphyrinogen decarboxylase.